A 994-amino-acid polypeptide reads, in one-letter code: Poly [ADP-ribose] polymerase (994 aa).

2 consecutive PARP-type zinc fingers follow at residues 7–89 and 111–200; these read YLAE…ENIQ and FGIE…PPIK. Residues C19, C22, H51, C54, C123, C126, H158, and C161 each contribute to the Zn(2+) site. The interval 199-225 is disordered; the sequence is IKSEELPDTKRAKMELSDTNEEGEKKQ. Basic and acidic residues predominate over residues 200–225; sequence KSEELPDTKRAKMELSDTNEEGEKKQ. 2 short sequence motifs (nuclear localization signal) span residues 208 to 210 and 223 to 228; these read KRA and KKQRLK. One can recognise a PADR1 zinc-binding domain in the interval 214 to 354; the sequence is LSDTNEEGEK…STRIFNNFPP (141 aa). The segment at 280–323 is zinc ribbon; sequence GAIESCSECNSCQFIVNKSGYICNGNHSEWTKCNKLLKEPTRSA. Residues C285, C288, C302, and C312 each coordinate Zn(2+). An automodification domain region spans residues 368-507; it reads KNNDVLVRPT…YTKSMPVSRT (140 aa). The region spanning 380–471 is the BRCT domain; it reads RISPPLYNLK…EGAIKYINST (92 aa). The 98-residue stretch at 525 to 622 folds into the WGR domain; it reads IAHVYVDSNN…DNFVKRTGRM (98 aa). Residues 644–761 form the PARP alpha-helical domain; it reads TSKLEISVQN…EIEVAYSIIK (118 aa). A PARP catalytic domain is found at 770–994; it reads NPLDNHYAQI…LFRMEFKYSY (225 aa). Residue E971 is the For poly [ADP-ribose] polymerase activity of the active site.

This sequence belongs to the ARTD/PARP family. In terms of tissue distribution, expressed in adult female oocytes, anal plates of stage 12 embryos and in cells around the central nervous system in later embryos.

Its subcellular location is the nucleus. It is found in the chromosome. The protein resides in the nucleolus. It catalyses the reaction NAD(+) + (ADP-D-ribosyl)n-acceptor = nicotinamide + (ADP-D-ribosyl)n+1-acceptor + H(+).. The catalysed reaction is L-seryl-[protein] + NAD(+) = O-(ADP-D-ribosyl)-L-seryl-[protein] + nicotinamide + H(+). The enzyme catalyses L-aspartyl-[protein] + NAD(+) = 4-O-(ADP-D-ribosyl)-L-aspartyl-[protein] + nicotinamide. It carries out the reaction L-glutamyl-[protein] + NAD(+) = 5-O-(ADP-D-ribosyl)-L-glutamyl-[protein] + nicotinamide. Its function is as follows. Poly-ADP-ribosyltransferase that mediates poly-ADP-ribosylation of proteins and plays a key role in DNA repair. Mediates glutamate, aspartate or serine ADP-ribosylation of proteins: the ADP-D-ribosyl group of NAD(+) is transferred to the acceptor carboxyl group of target residues and further ADP-ribosyl groups are transferred to the 2'-position of the terminal adenosine moiety, building up a polymer with an average chain length of 20-30 units. Mainly mediates glutamate and aspartate ADP-ribosylation of target proteins in absence of CG1218/HPF1. Following interaction with CG1218/HPF1, catalyzes serine ADP-ribosylation of target proteins; CG1218/HPF1 conferring serine specificity by completing the Parp active site. Functionally, plays a fundamental role in organizing chromatin on a global scale. Autoregulates Parp transcription by influencing the chromatin structure of its heterochromatic environment. The polypeptide is Poly [ADP-ribose] polymerase (Parp) (Drosophila melanogaster (Fruit fly)).